Here is a 256-residue protein sequence, read N- to C-terminus: Small ribosomal subunit protein eS1 (256 aa).

Alanine 2 is modified (N-acetylalanine; partial).

This sequence belongs to the eukaryotic ribosomal protein eS1 family. Component of the small ribosomal subunit. Mature ribosomes consist of a small (40S) and a large (60S) subunit. The 40S subunit contains about 33 different proteins and 1 molecule of RNA (18S). The 60S subunit contains about 49 different proteins and 3 molecules of RNA (25S, 5.8S and 5S).

It is found in the cytoplasm. The sequence is that of Small ribosomal subunit protein eS1 from Postia placenta (strain ATCC 44394 / Madison 698-R) (Brown rot fungus).